A 341-amino-acid polypeptide reads, in one-letter code: Protein phosphatase methylesterase 1 (341 aa).

Residues M1–K24 form a disordered region. Polar residues predominate over residues S9–S20. Catalysis depends on residues S153, D178, and H304.

The protein belongs to the AB hydrolase superfamily.

The enzyme catalyses [phosphatase 2A protein]-C-terminal L-leucine methyl ester + H2O = [phosphatase 2A protein]-C-terminal L-leucine + methanol + H(+). Functionally, demethylates proteins that have been reversibly carboxymethylated. Demethylates the phosphatase PP2A catalytic subunit. The protein is Protein phosphatase methylesterase 1 (ppe1) of Schizosaccharomyces pombe (strain 972 / ATCC 24843) (Fission yeast).